A 385-amino-acid chain; its full sequence is MKNITILGATGSIGTQTLDVIRKEKEELKLVAISANKSYKKVIEIIKEFKPKYAVLMEENAFKIVEDFCIDNKIDTKVLKGMEGMIYISTLEEVNTVVTSVVGMIGLVPTIKAIESGKDIALANKETLVVAGELVISKAKEHNVNILPVDSEHGAIFQCLRGNKKEEVKNIIVTASGGPFRGKKKEELIEVKPEHALKHPKWNMGRKISIDSATLMNKGLEVIEAHFLFGVDYENIKVVVHPQSIVHSMVEYKDGSVIAQMATPDMKLPIQYALNYPNRKESQIEPLDFYKISNLTFEKPDMDTFLPLKLAYEAGEKGGVMPAILNGANEVAVDLFLKGKIEFLQIGDLLQECMNKFYKSMEATLENVISVDKEVREYLGKKYDI.

NADPH-binding residues include Thr10, Gly11, Ser12, Ile13, Lys37, and Asn124. 1-deoxy-D-xylulose 5-phosphate is bound at residue Lys125. Glu126 lines the NADPH pocket. Asp150 contacts Mn(2+). Ser151, Glu152, Ser176, and His199 together coordinate 1-deoxy-D-xylulose 5-phosphate. Glu152 serves as a coordination point for Mn(2+). Gly205 serves as a coordination point for NADPH. Residues Ser212, Asn217, Lys218, and Glu221 each coordinate 1-deoxy-D-xylulose 5-phosphate. Glu221 contacts Mn(2+).

This sequence belongs to the DXR family. Mg(2+) is required as a cofactor. Requires Mn(2+) as cofactor.

The enzyme catalyses 2-C-methyl-D-erythritol 4-phosphate + NADP(+) = 1-deoxy-D-xylulose 5-phosphate + NADPH + H(+). It participates in isoprenoid biosynthesis; isopentenyl diphosphate biosynthesis via DXP pathway; isopentenyl diphosphate from 1-deoxy-D-xylulose 5-phosphate: step 1/6. In terms of biological role, catalyzes the NADPH-dependent rearrangement and reduction of 1-deoxy-D-xylulose-5-phosphate (DXP) to 2-C-methyl-D-erythritol 4-phosphate (MEP). In Clostridium botulinum (strain Okra / Type B1), this protein is 1-deoxy-D-xylulose 5-phosphate reductoisomerase.